The following is a 218-amino-acid chain: Uracil-DNA glycosylase (218 aa).

D59 acts as the Proton acceptor in catalysis.

The protein belongs to the uracil-DNA glycosylase (UDG) superfamily. UNG family.

The protein resides in the cytoplasm. The catalysed reaction is Hydrolyzes single-stranded DNA or mismatched double-stranded DNA and polynucleotides, releasing free uracil.. Its function is as follows. Excises uracil residues from the DNA which can arise as a result of misincorporation of dUMP residues by DNA polymerase or due to deamination of cytosine. The polypeptide is Uracil-DNA glycosylase (Staphylococcus aureus (strain bovine RF122 / ET3-1)).